A 144-amino-acid chain; its full sequence is Transcription antitermination protein NusB (144 aa).

This sequence belongs to the NusB family.

In terms of biological role, involved in transcription antitermination. Required for transcription of ribosomal RNA (rRNA) genes. Binds specifically to the boxA antiterminator sequence of the ribosomal RNA (rrn) operons. This is Transcription antitermination protein NusB from Paraburkholderia phytofirmans (strain DSM 17436 / LMG 22146 / PsJN) (Burkholderia phytofirmans).